A 256-amino-acid polypeptide reads, in one-letter code: Pimeloyl-[acyl-carrier protein] methyl ester esterase (256 aa).

One can recognise an AB hydrolase-1 domain in the interval 16–240 (LVILHGWGVN…PKASHAPFLS (225 aa)). Substrate is bound by residues Trp-22, 80–81 (SL), and 143–147 (FLAIQ). The Nucleophile role is filled by Ser-80. Active-site residues include Asp-207 and His-235. Substrate is bound at residue His-235.

The protein belongs to the AB hydrolase superfamily. Carboxylesterase BioH family. In terms of assembly, monomer.

The protein localises to the cytoplasm. The catalysed reaction is 6-carboxyhexanoyl-[ACP] methyl ester + H2O = 6-carboxyhexanoyl-[ACP] + methanol + H(+). It participates in cofactor biosynthesis; biotin biosynthesis. In terms of biological role, the physiological role of BioH is to remove the methyl group introduced by BioC when the pimeloyl moiety is complete. It allows to synthesize pimeloyl-ACP via the fatty acid synthetic pathway through the hydrolysis of the ester bonds of pimeloyl-ACP esters. This is Pimeloyl-[acyl-carrier protein] methyl ester esterase from Shewanella woodyi (strain ATCC 51908 / MS32).